Here is a 149-residue protein sequence, read N- to C-terminus: Alpha-crystallin A chain (149 aa).

The 109-residue stretch at 41 to 149 (LFRSVLESGI…DPSHSERPIP (109 aa)) folds into the sHSP domain. Zn(2+)-binding residues include His89, Glu91, His96, and His143.

The protein belongs to the small heat shock protein (HSP20) family. As to quaternary structure, heteropolymer composed of three CRYAA and one CRYAB subunits. Inter-subunit bridging via zinc ions enhances stability, which is crucial as there is no protein turn over in the lens. Can also form homodimers and homotetramers (dimers of dimers) which serve as the building blocks of homooligomers. Within homooligomers, the zinc-binding motif is created from residues of 3 different molecules. His-89 and Glu-91 from one molecule are ligands of the zinc ion, and His-96 and His-143 residues from additional molecules complete the site with tetrahedral coordination geometry.

It localises to the cytoplasm. The protein localises to the nucleus. In terms of biological role, contributes to the transparency and refractive index of the lens. May act as a chaperone, preventing aggregation of various proteins under a wide range of stress conditions. This is Alpha-crystallin A chain (CRYAA) from Eudromia elegans (Elegant crested-tinamou).